A 500-amino-acid polypeptide reads, in one-letter code: Cytochrome P450 11B1, mitochondrial (500 aa).

A mitochondrion-targeting transit peptide spans 1-24 (MAFRLKSDVRLAGSWLCLRGARAL). C447 is a binding site for heme.

Belongs to the cytochrome P450 family. The cofactor is heme.

The protein localises to the mitochondrion inner membrane. It catalyses the reaction a steroid + 2 reduced [adrenodoxin] + O2 + 2 H(+) = an 11beta-hydroxysteroid + 2 oxidized [adrenodoxin] + H2O. It carries out the reaction 11-deoxycortisol + 2 reduced [adrenodoxin] + O2 + 2 H(+) = cortisol + 2 oxidized [adrenodoxin] + H2O. The catalysed reaction is 21-hydroxyprogesterone + 2 reduced [adrenodoxin] + O2 + 2 H(+) = corticosterone + 2 oxidized [adrenodoxin] + H2O. The enzyme catalyses 21-hydroxyprogesterone + 2 reduced [adrenodoxin] + O2 + 2 H(+) = 18-hydroxy-11-deoxycorticosterone + 2 oxidized [adrenodoxin] + H2O. It catalyses the reaction 21-hydroxyprogesterone + 2 reduced [adrenodoxin] + O2 + 2 H(+) = 19-hydroxy-11-deoxycorticosterone + 2 oxidized [adrenodoxin] + H2O. It carries out the reaction cortisol + 2 reduced [adrenodoxin] + O2 + 2 H(+) = 18-hydroxycortisol + 2 oxidized [adrenodoxin] + H2O. The catalysed reaction is 11-deoxycortisol + 2 reduced [adrenodoxin] + O2 + 2 H(+) = 18-hydroxy-11-deoxycortisol + 2 oxidized [adrenodoxin] + H2O. Its pathway is steroid biosynthesis; glucocorticoid biosynthesis. The protein operates within steroid hormone biosynthesis. Functionally, a cytochrome P450 monooxygenase involved in the biosynthesis of adrenal corticoids. Catalyzes a variety of reactions that are essential for many species, including detoxification, defense, and the formation of endogenous chemicals like steroid hormones. Steroid 11beta, 18- and 19-hydroxylase with preferred regioselectivity at 11beta, then 18, and lastly 19. Catalyzes the hydroxylation of 11-deoxycortisol and 11-deoxycorticosterone (21-hydroxyprogesterone) at 11beta position, yielding cortisol or corticosterone, respectively, but cannot produce aldosterone. Mechanistically, uses molecular oxygen inserting one oxygen atom into a substrate for hydroxylation and reducing the second into a water molecule. Two electrons are provided by NADPH via a two-protein mitochondrial transfer system comprising flavoprotein FDXR (adrenodoxin/ferredoxin reductase) and nonheme iron-sulfur protein FDX1 or FDX2 (adrenodoxin/ferredoxin). Due to its lack of 18-oxidation activity, it is incapable of generating aldosterone. Could also be involved in the androgen metabolic pathway. This is Cytochrome P450 11B1, mitochondrial (CYP11B1) from Cavia porcellus (Guinea pig).